The chain runs to 309 residues: Homoserine O-succinyltransferase (309 aa).

The active-site Acyl-thioester intermediate is Cys142. Residues Lys163 and Ser192 each contribute to the substrate site. His235 acts as the Proton acceptor in catalysis. Glu237 is an active-site residue. Position 249 (Arg249) interacts with substrate.

The protein belongs to the MetA family.

It is found in the cytoplasm. The enzyme catalyses L-homoserine + succinyl-CoA = O-succinyl-L-homoserine + CoA. It functions in the pathway amino-acid biosynthesis; L-methionine biosynthesis via de novo pathway; O-succinyl-L-homoserine from L-homoserine: step 1/1. Transfers a succinyl group from succinyl-CoA to L-homoserine, forming succinyl-L-homoserine. In Citrobacter koseri (strain ATCC BAA-895 / CDC 4225-83 / SGSC4696), this protein is Homoserine O-succinyltransferase.